Here is a 196-residue protein sequence, read N- to C-terminus: Thymidine kinase (196 aa).

Residues 9-16 (GTMNSGKS) and 85-88 (DEAQ) contribute to the ATP site. The Proton acceptor role is filled by glutamate 86. The Zn(2+) site is built by cysteine 143, cysteine 146, cysteine 180, and histidine 183.

The protein belongs to the thymidine kinase family. Homotetramer.

It is found in the cytoplasm. The enzyme catalyses thymidine + ATP = dTMP + ADP + H(+). This is Thymidine kinase from Streptococcus thermophilus (strain CNRZ 1066).